The sequence spans 92 residues: Probable Fe(2+)-trafficking protein (92 aa).

The protein belongs to the Fe(2+)-trafficking protein family.

Functionally, could be a mediator in iron transactions between iron acquisition and iron-requiring processes, such as synthesis and/or repair of Fe-S clusters in biosynthetic enzymes. The polypeptide is Probable Fe(2+)-trafficking protein (Shewanella baltica (strain OS223)).